Consider the following 360-residue polypeptide: Photosystem II protein D1 (360 aa).

3 consecutive transmembrane segments (helical) span residues 29–46, 118–133, and 142–156; these read YIGW…TATT, HFLL…EWEL, and WIFV…AASA. His118 serves as a coordination point for chlorophyll a. Pheophytin a is bound at residue Tyr126. Asp170 and Glu189 together coordinate [CaMn4O5] cluster. A helical membrane pass occupies residues 197–218; that stretch reads FHMAGVAGVFGGSLFSAMHGSL. His198 serves as a coordination point for chlorophyll a. Residues His215 and 264–265 contribute to the a quinone site; that span reads SF. Position 215 (His215) interacts with Fe cation. His272 lines the Fe cation pocket. A helical transmembrane segment spans residues 274–288; it reads FLAAWPVVRIWLTAL. Positions 332, 333, 342, and 344 each coordinate [CaMn4O5] cluster. A propeptide spanning residues 345–360 is cleaved from the precursor; the sequence is AGEVLPVAVSAPAVHA.

It belongs to the reaction center PufL/M/PsbA/D family. In terms of assembly, PSII is composed of 1 copy each of membrane proteins PsbA, PsbB, PsbC, PsbD, PsbE, PsbF, PsbH, PsbI, PsbJ, PsbK, PsbL, PsbM, PsbT, PsbX, PsbY, PsbZ, Psb30/Ycf12, at least 3 peripheral proteins of the oxygen-evolving complex and a large number of cofactors. It forms dimeric complexes. It depends on The D1/D2 heterodimer binds P680, chlorophylls that are the primary electron donor of PSII, and subsequent electron acceptors. It shares a non-heme iron and each subunit binds pheophytin, quinone, additional chlorophylls, carotenoids and lipids. D1 provides most of the ligands for the Mn4-Ca-O5 cluster of the oxygen-evolving complex (OEC). There is also a Cl(-1) ion associated with D1 and D2, which is required for oxygen evolution. The PSII complex binds additional chlorophylls, carotenoids and specific lipids. as a cofactor. Post-translationally, tyr-161 forms a radical intermediate that is referred to as redox-active TyrZ, YZ or Y-Z. C-terminally processed by CTPA; processing is essential to allow assembly of the oxygen-evolving complex and thus photosynthetic growth.

It localises to the plastid. Its subcellular location is the chloroplast thylakoid membrane. It catalyses the reaction 2 a plastoquinone + 4 hnu + 2 H2O = 2 a plastoquinol + O2. Its function is as follows. Photosystem II (PSII) is a light-driven water:plastoquinone oxidoreductase that uses light energy to abstract electrons from H(2)O, generating O(2) and a proton gradient subsequently used for ATP formation. It consists of a core antenna complex that captures photons, and an electron transfer chain that converts photonic excitation into a charge separation. The D1/D2 (PsbA/PsbD) reaction center heterodimer binds P680, the primary electron donor of PSII as well as several subsequent electron acceptors. The sequence is that of Photosystem II protein D1 from Bumilleriopsis filiformis (Yellow-green alga).